The chain runs to 365 residues: UDP-N-acetylglucosamine--N-acetylmuramyl-(pentapeptide) pyrophosphoryl-undecaprenol N-acetylglucosamine transferase (365 aa).

UDP-N-acetyl-alpha-D-glucosamine contacts are provided by residues threonine 11–glycine 13, asparagine 124, arginine 165, serine 192, isoleucine 246, and glutamine 291.

The protein belongs to the glycosyltransferase 28 family. MurG subfamily.

The protein resides in the cell inner membrane. The enzyme catalyses di-trans,octa-cis-undecaprenyl diphospho-N-acetyl-alpha-D-muramoyl-L-alanyl-D-glutamyl-meso-2,6-diaminopimeloyl-D-alanyl-D-alanine + UDP-N-acetyl-alpha-D-glucosamine = di-trans,octa-cis-undecaprenyl diphospho-[N-acetyl-alpha-D-glucosaminyl-(1-&gt;4)]-N-acetyl-alpha-D-muramoyl-L-alanyl-D-glutamyl-meso-2,6-diaminopimeloyl-D-alanyl-D-alanine + UDP + H(+). It participates in cell wall biogenesis; peptidoglycan biosynthesis. Its function is as follows. Cell wall formation. Catalyzes the transfer of a GlcNAc subunit on undecaprenyl-pyrophosphoryl-MurNAc-pentapeptide (lipid intermediate I) to form undecaprenyl-pyrophosphoryl-MurNAc-(pentapeptide)GlcNAc (lipid intermediate II). The polypeptide is UDP-N-acetylglucosamine--N-acetylmuramyl-(pentapeptide) pyrophosphoryl-undecaprenol N-acetylglucosamine transferase (Nitratidesulfovibrio vulgaris (strain DP4) (Desulfovibrio vulgaris)).